Consider the following 216-residue polypeptide: Nucleoside triphosphate pyrophosphatase (216 aa).

Asp82 acts as the Proton acceptor in catalysis.

The protein belongs to the Maf family. It depends on a divalent metal cation as a cofactor.

Its subcellular location is the cytoplasm. The catalysed reaction is a ribonucleoside 5'-triphosphate + H2O = a ribonucleoside 5'-phosphate + diphosphate + H(+). It catalyses the reaction a 2'-deoxyribonucleoside 5'-triphosphate + H2O = a 2'-deoxyribonucleoside 5'-phosphate + diphosphate + H(+). In terms of biological role, nucleoside triphosphate pyrophosphatase. May have a dual role in cell division arrest and in preventing the incorporation of modified nucleotides into cellular nucleic acids. The polypeptide is Nucleoside triphosphate pyrophosphatase (Mycobacterium marinum (strain ATCC BAA-535 / M)).